A 162-amino-acid polypeptide reads, in one-letter code: NADH-quinone oxidoreductase subunit I (162 aa).

4Fe-4S ferredoxin-type domains follow at residues 54-83 (RRYENGEERCIACKLCEAVCPAMAITIESE) and 93-122 (TRYDIDLTKCIFCGFCEESCPVDSIVETQI). Residues Cys63, Cys66, Cys69, Cys73, Cys102, Cys105, Cys108, and Cys112 each coordinate [4Fe-4S] cluster.

Belongs to the complex I 23 kDa subunit family. In terms of assembly, NDH-1 is composed of 14 different subunits. Subunits NuoA, H, J, K, L, M, N constitute the membrane sector of the complex. It depends on [4Fe-4S] cluster as a cofactor.

It localises to the cell inner membrane. It carries out the reaction a quinone + NADH + 5 H(+)(in) = a quinol + NAD(+) + 4 H(+)(out). Its function is as follows. NDH-1 shuttles electrons from NADH, via FMN and iron-sulfur (Fe-S) centers, to quinones in the respiratory chain. The immediate electron acceptor for the enzyme in this species is believed to be ubiquinone. Couples the redox reaction to proton translocation (for every two electrons transferred, four hydrogen ions are translocated across the cytoplasmic membrane), and thus conserves the redox energy in a proton gradient. This Burkholderia vietnamiensis (strain G4 / LMG 22486) (Burkholderia cepacia (strain R1808)) protein is NADH-quinone oxidoreductase subunit I.